The following is a 383-amino-acid chain: Probable cell wall hydrolase LytN (383 aa).

Positions 1-49 (MFIYYCKECSIMNKQQSKVRYSIRKVSIGILSISIGMFLALGMSNKAYA) are cleaved as a signal peptide. One can recognise a LysM domain in the interval 175-219 (QIYTVKKGDTLSAIALKYKTTVSNIQNTNNIANPNLIFIGQKLKV). A Peptidase C51 domain is found at 241-378 (NSSTLNYLKT…NYENDMIFIR (138 aa)).

The protein localises to the secreted. Probably involved in peptidoglycan hydrolysis. This chain is Probable cell wall hydrolase LytN (lytN), found in Staphylococcus aureus (strain Mu50 / ATCC 700699).